A 52-amino-acid polypeptide reads, in one-letter code: Phospholamban (52 aa).

Residue M1 is modified to N-acetylmethionine. Residues 1–31 are Cytoplasmic-facing; sequence MDKVQYLTRSAIRRASTIEMPQQARQNLQNL. The residue at position 16 (S16) is a Phosphoserine; by PKA and DMPK. T17 is modified (phosphothreonine; by CaMK2). Residues 32–52 traverse the membrane as a helical segment; that stretch reads FINFCLILICLLLICIIVMLL. The S-palmitoyl cysteine moiety is linked to residue C36.

The protein belongs to the phospholamban family. As to quaternary structure, homopentamer. Can also form heterooligomers with other sarcoplasmic/endoplasmic reticulum calcium ATPase (SERCA) regulators ARLN, ERLN, SLN and STRIT1/DWORF. Monomer. Interacts with HAX1. Interacts as a monomer with ATP2A2; the interaction decreases ATP2A2 Ca(2+) affinity. Interacts with VMP1; VMP1 competes with PLN and SLN to prevent them from forming an inhibitory complex with ATP2A2. Interacts with S100A1 in a Ca(2+)-dependent manner. Post-translationally, phosphorylation by DMPK may stimulate sarcoplasmic reticulum calcium uptake in cardiomyocytes. Phosphorylation by PKA abolishes the inhibition of ATP2A2-mediated calcium uptake. Phosphorylated at Thr-17 by CaMK2, and in response to beta-adrenergic stimulation. In terms of processing, palmitoylated by ZDHHC16, promoting formation of the homopentamer. In elongated spermatids, proteolytically cleaved by SPPL2C which modulates intracellular Ca(2+) homeostasis. In terms of tissue distribution, heart.

The protein resides in the endoplasmic reticulum membrane. Its subcellular location is the sarcoplasmic reticulum membrane. It localises to the mitochondrion membrane. The protein localises to the membrane. Its function is as follows. Reversibly inhibits the activity of ATP2A2/SERCA2 in cardiac sarcoplasmic reticulum by decreasing the apparent affinity of the ATPase for Ca(2+). Binds preferentially to the ATP-bound E1 conformational form of ATP2A2 which predominates at low Ca(2+) concentrations during the diastolic phase of the cardiac cycle. Inhibits ATP2A2 Ca(2+) affinity by disrupting its allosteric activation by ATP. Modulates the contractility of the heart muscle in response to physiological stimuli via its effects on ATP2A2. Modulates calcium re-uptake during muscle relaxation and plays an important role in calcium homeostasis in the heart muscle. The degree of ATP2A2 inhibition depends on the oligomeric state of PLN. ATP2A2 inhibition is alleviated by PLN phosphorylation. Also inhibits the activity of ATP2A3/SERCA3. Controls intracellular Ca(2+) levels in elongated spermatids and may play a role in germ cell differentiation. In the thalamic reticular nucleus of the brain, plays a role in the regulation of sleep patterns and executive functioning. The sequence is that of Phospholamban from Canis lupus familiaris (Dog).